The primary structure comprises 218 residues: UPF0301 protein RPB_4502 (218 aa).

Residues 1–26 (MVTKSKRPKSGDRSGREPGNAGPIEQ) form a disordered region.

The protein belongs to the UPF0301 (AlgH) family.

This is UPF0301 protein RPB_4502 from Rhodopseudomonas palustris (strain HaA2).